We begin with the raw amino-acid sequence, 164 residues long: Ubiquitin-fold modifier-conjugating enzyme 1 (164 aa).

Cys-116 (glycyl thioester intermediate) is an active-site residue.

The protein belongs to the ubiquitin-conjugating enzyme family. UFC1 subfamily.

Functionally, E2-like enzyme which forms an intermediate with UFM1 via a thioester linkage. This Drosophila ananassae (Fruit fly) protein is Ubiquitin-fold modifier-conjugating enzyme 1.